Consider the following 525-residue polypeptide: AarF domain-containing protein kinase 1 (525 aa).

A Protein kinase domain is found at 148 to 477 (SFDDTPLGAA…HKKRDAGSFF (330 aa)). ATP contacts are provided by residues 154–162 (LGAASLAQV) and Lys176. The active-site Proton acceptor is the Asp308.

It belongs to the protein kinase superfamily. ADCK protein kinase family.

It localises to the mitochondrion. Its function is as follows. Appears to be essential for maintaining mitochondrial cristae formation and mitochondrial function by acting via YME1L1 in a kinase-independent manner to regulate essential mitochondrial structural proteins OPA1 and IMMT. The action of this enzyme is not yet clear. It is not known if it has protein kinase activity and what type of substrate it would phosphorylate (Ser, Thr or Tyr). The protein is AarF domain-containing protein kinase 1 (Adck1) of Mus musculus (Mouse).